Reading from the N-terminus, the 106-residue chain is MAGKTVTRADLSEAVYHQVGLSRTESAALVETVLSEICSCLASGETVKLSSFGSFVVRSKGKRVGRNPKTGVEVAIEPRQVMVFKPSNVLKAKINGLNGAGEHDDD.

Belongs to the bacterial histone-like protein family. As to quaternary structure, heterodimer of an alpha and a beta chain.

In terms of biological role, this protein is one of the two subunits of integration host factor, a specific DNA-binding protein that functions in genetic recombination as well as in transcriptional and translational control. This chain is Integration host factor subunit alpha, found in Methylobacterium radiotolerans (strain ATCC 27329 / DSM 1819 / JCM 2831 / NBRC 15690 / NCIMB 10815 / 0-1).